Consider the following 245-residue polypeptide: MNDKTTSLHANVDQHEIDKFESVASRWWDLEGEFKPLHRINPLRLNYIQERADGLFGKKVLDVGCGGGILSESMARVGAEVTGLDMGKEPLEVARLHSLETGIPVTYIQDTVENHAAEYPQRYDVVTCMEMLEHVPDPSSIVRSCAKLVKPGGHVFFSTINRNKKAWFMLVVGAEYILNMVPKGTHDANKFIRPSELLSWVDETNLRSKNMIGLHYNPITDKFRLAPNVDVNYMVHTQATDNSDL.

Positions 44, 64, 85, and 129 each coordinate S-adenosyl-L-methionine.

This sequence belongs to the methyltransferase superfamily. UbiG/COQ3 family.

It catalyses the reaction a 3-demethylubiquinol + S-adenosyl-L-methionine = a ubiquinol + S-adenosyl-L-homocysteine + H(+). The catalysed reaction is a 3-(all-trans-polyprenyl)benzene-1,2-diol + S-adenosyl-L-methionine = a 2-methoxy-6-(all-trans-polyprenyl)phenol + S-adenosyl-L-homocysteine + H(+). The protein operates within cofactor biosynthesis; ubiquinone biosynthesis. Its function is as follows. O-methyltransferase that catalyzes the 2 O-methylation steps in the ubiquinone biosynthetic pathway. This Proteus mirabilis (strain HI4320) protein is Ubiquinone biosynthesis O-methyltransferase.